Reading from the N-terminus, the 349-residue chain is Histidinol-phosphate aminotransferase (349 aa).

Position 206 is an N6-(pyridoxal phosphate)lysine (lysine 206).

The protein belongs to the class-II pyridoxal-phosphate-dependent aminotransferase family. Histidinol-phosphate aminotransferase subfamily. Homodimer. Requires pyridoxal 5'-phosphate as cofactor.

It carries out the reaction L-histidinol phosphate + 2-oxoglutarate = 3-(imidazol-4-yl)-2-oxopropyl phosphate + L-glutamate. It functions in the pathway amino-acid biosynthesis; L-histidine biosynthesis; L-histidine from 5-phospho-alpha-D-ribose 1-diphosphate: step 7/9. This is Histidinol-phosphate aminotransferase from Hydrogenobaculum sp. (strain Y04AAS1).